A 218-amino-acid polypeptide reads, in one-letter code: N-(5'-phosphoribosyl)anthranilate isomerase (218 aa).

It belongs to the TrpF family.

The enzyme catalyses N-(5-phospho-beta-D-ribosyl)anthranilate = 1-(2-carboxyphenylamino)-1-deoxy-D-ribulose 5-phosphate. It functions in the pathway amino-acid biosynthesis; L-tryptophan biosynthesis; L-tryptophan from chorismate: step 3/5. This Rhodopseudomonas palustris (strain BisA53) protein is N-(5'-phosphoribosyl)anthranilate isomerase.